The chain runs to 139 residues: Large ribosomal subunit protein uL16c (139 aa).

Basic residues predominate over residues 1–17 (MLSPKKTKFRKQHRGRM). The segment at 1–23 (MLSPKKTKFRKQHRGRMKGSASK) is disordered.

This sequence belongs to the universal ribosomal protein uL16 family. As to quaternary structure, part of the 50S ribosomal subunit.

It localises to the plastid. Its subcellular location is the chloroplast. This chain is Large ribosomal subunit protein uL16c, found in Pyropia yezoensis (Susabi-nori).